A 150-amino-acid chain; its full sequence is D-aminoacyl-tRNA deacylase (150 aa).

The Gly-cisPro motif, important for rejection of L-amino acids signature appears at 138–139; that stretch reads GP.

The protein belongs to the DTD family. In terms of assembly, homodimer.

The protein localises to the cytoplasm. It catalyses the reaction glycyl-tRNA(Ala) + H2O = tRNA(Ala) + glycine + H(+). The enzyme catalyses a D-aminoacyl-tRNA + H2O = a tRNA + a D-alpha-amino acid + H(+). An aminoacyl-tRNA editing enzyme that deacylates mischarged D-aminoacyl-tRNAs. Also deacylates mischarged glycyl-tRNA(Ala), protecting cells against glycine mischarging by AlaRS. Acts via tRNA-based rather than protein-based catalysis; rejects L-amino acids rather than detecting D-amino acids in the active site. By recycling D-aminoacyl-tRNA to D-amino acids and free tRNA molecules, this enzyme counteracts the toxicity associated with the formation of D-aminoacyl-tRNA entities in vivo and helps enforce protein L-homochirality. The sequence is that of D-aminoacyl-tRNA deacylase from Natranaerobius thermophilus (strain ATCC BAA-1301 / DSM 18059 / JW/NM-WN-LF).